A 292-amino-acid chain; its full sequence is Elongation factor Ts (292 aa).

Residues 79–82 (TDFV) are involved in Mg(2+) ion dislocation from EF-Tu.

The protein belongs to the EF-Ts family.

It is found in the cytoplasm. Functionally, associates with the EF-Tu.GDP complex and induces the exchange of GDP to GTP. It remains bound to the aminoacyl-tRNA.EF-Tu.GTP complex up to the GTP hydrolysis stage on the ribosome. The chain is Elongation factor Ts from Xanthomonas campestris pv. campestris (strain B100).